A 370-amino-acid chain; its full sequence is Cyanuric acid amidohydrolase (370 aa).

The tract at residues 1–106 (MRTTSVGVFK…TVFTRREVER (106 aa)) is RU A. Residues R54 and 85-86 (SG) contribute to the substrate site. The interval 115-251 (RLSIGMAHTR…NVVIVLGNSA (137 aa)) is RU B. K165 is a catalytic residue. Residues R197 and 234 to 235 (SA) each bind substrate. The Nucleophile role is filled by S234. The segment at 257-370 (FEIGHAVMND…PVAVIARLSD (114 aa)) is RU C. Mg(2+) is bound at residue E302. Residues R329 and 348 to 349 (SG) contribute to the substrate site. A351, Q354, G355, P356, and G359 together coordinate Mg(2+).

The protein belongs to the cyclic amide hydrolase (CyAH) family. Homotetramer.

The catalysed reaction is cyanurate + H2O = 1-carboxybiuret + H(+). It participates in xenobiotic degradation; atrazine degradation; biuret from cyanurate: step 1/1. With respect to regulation, inhibited by barbituric acid. Responsible for the hydrolysis of cyanuric acid, an intermediate formed during catabolism of s-triazine based compounds in herbicides such as atrazine and polymers such as melamine. Catalyzes the hydrolytic opening of the s-triazine ring of cyanuric acid (2,4,6-trihydroxy-s-triazine) to yield carbon dioxide and carboxybiuret, which spontaneously decarboxylates to biuret. This chain is Cyanuric acid amidohydrolase, found in Bradyrhizobium diazoefficiens (strain JCM 10833 / BCRC 13528 / IAM 13628 / NBRC 14792 / USDA 110).